Consider the following 470-residue polypeptide: Poly(A) polymerase catalytic subunit (470 aa).

Catalysis depends on residues aspartate 192 and aspartate 194.

It belongs to the poxviridae poly(A) polymerase catalytic subunit family. In terms of assembly, heterodimer of a large (catalytic) subunit and a small (regulatory) subunit.

The catalysed reaction is RNA(n) + ATP = RNA(n)-3'-adenine ribonucleotide + diphosphate. In terms of biological role, polymerase that creates the 3'-poly(A) tail of mRNA's. The protein is Poly(A) polymerase catalytic subunit (PAPL) of Myxoma virus (strain Lausanne) (MYXV).